Reading from the N-terminus, the 392-residue chain is Acetyl-CoA acetyltransferase (392 aa).

Catalysis depends on cysteine 89, which acts as the Acyl-thioester intermediate. Residues histidine 348 and cysteine 378 each act as proton acceptor in the active site.

This sequence belongs to the thiolase-like superfamily. Thiolase family. In terms of assembly, homotetramer.

The protein resides in the cytoplasm. The catalysed reaction is 2 acetyl-CoA = acetoacetyl-CoA + CoA. It participates in biopolymer metabolism; poly-(R)-3-hydroxybutanoate biosynthesis. The protein operates within metabolic intermediate biosynthesis; (R)-mevalonate biosynthesis; (R)-mevalonate from acetyl-CoA: step 1/3. The chain is Acetyl-CoA acetyltransferase from Shinella zoogloeoides (Crabtreella saccharophila).